A 414-amino-acid polypeptide reads, in one-letter code: Tetraspanning orphan receptor (414 aa).

Topologically, residues 1-28 (MPRASALLTSDPRHQFTCCLCLHVRTGT) are cytoplasmic. Residues 29-49 (IIFGITQIIIQLIFISFLFLM) traverse the membrane as a helical segment. The Extracellular segment spans residues 50-166 (TFNPRLFPED…EIKIRQFSPY (117 aa)). The chain crosses the membrane as a helical span at residues 167–187 (IAVCVTTFSLAFCCFMVHGAI). Residues 188–194 (TRQPTHL) lie on the Cytoplasmic side of the membrane. The helical transmembrane segment at 195-215 (LPFFFIQVFDLIICLIHILGF) threads the bilayer. The Extracellular portion of the chain corresponds to 216-241 (MSSTSDIRLMIHTKTGPIYIKSTGLA). The chain crosses the membrane as a helical span at residues 242-262 (FIILSISCMMLAFKAYCLGMV). The Cytoplasmic portion of the chain corresponds to 263–414 (WDCYKYLMLN…TSTPSNVHPC (152 aa)). Residues 306–328 (LTGNLDSANESNTRAHPDPVTYD) are disordered.

As to quaternary structure, interacts (via N-terminal extracellular domain) with human C2a. Post-translationally, phosphorylated on tyrosine residues.

It is found in the cell membrane. In terms of biological role, cell surface receptor that binds to human complement C2a protein. This results in inhibition of the classical and lectin pathways of complement activation, probably due to interference with binding of C2a to C4b and interference with cleavage by C1 or MASP2 such that C3 convertase cannot be formed. This infers resistance to complement-mediated cell lysis, allowing parasite survival and infection. This chain is Tetraspanning orphan receptor, found in Schistosoma japonicum (Blood fluke).